Here is a 206-residue protein sequence, read N- to C-terminus: Histidine biosynthesis bifunctional protein HisIE (206 aa).

The segment at 1-117 (MCNEPATSDV…SCFPAAPGQF (117 aa)) is phosphoribosyl-AMP cyclohydrolase. Positions 118–206 (LGALDALVAE…AVTVLEARHR (89 aa)) are phosphoribosyl-ATP pyrophosphohydrolase.

In the N-terminal section; belongs to the PRA-CH family. The protein in the C-terminal section; belongs to the PRA-PH family.

Its subcellular location is the cytoplasm. The enzyme catalyses 1-(5-phospho-beta-D-ribosyl)-ATP + H2O = 1-(5-phospho-beta-D-ribosyl)-5'-AMP + diphosphate + H(+). It carries out the reaction 1-(5-phospho-beta-D-ribosyl)-5'-AMP + H2O = 1-(5-phospho-beta-D-ribosyl)-5-[(5-phospho-beta-D-ribosylamino)methylideneamino]imidazole-4-carboxamide. It participates in amino-acid biosynthesis; L-histidine biosynthesis; L-histidine from 5-phospho-alpha-D-ribose 1-diphosphate: step 2/9. Its pathway is amino-acid biosynthesis; L-histidine biosynthesis; L-histidine from 5-phospho-alpha-D-ribose 1-diphosphate: step 3/9. The polypeptide is Histidine biosynthesis bifunctional protein HisIE (hisI) (Xylella fastidiosa (strain 9a5c)).